A 105-amino-acid polypeptide reads, in one-letter code: uncharacterized protein (105 aa).

The next 2 helical transmembrane spans lie at 10 to 30 (YVVFIISLIVLLIIFYVFKIG) and 48 to 68 (YPLAISLVIWVIWYFLLYPPS).

It is found in the membrane. This is an uncharacterized protein from Acanthamoeba polyphaga mimivirus (APMV).